The primary structure comprises 628 residues: Carbon monoxide dehydrogenase 1 (628 aa).

Residues cysteine 44, cysteine 52, cysteine 53, cysteine 56, cysteine 61, and cysteine 75 each coordinate [4Fe-4S] cluster. Positions 266, 302, 340, 448, 478, and 519 each coordinate [Ni-4Fe-5S] cluster.

It belongs to the Ni-containing carbon monoxide dehydrogenase family. In terms of assembly, homodimer. [4Fe-4S] cluster serves as cofactor. The cofactor is [Ni-4Fe-5S] cluster.

It catalyses the reaction CO + 2 oxidized [2Fe-2S]-[ferredoxin] + H2O = 2 reduced [2Fe-2S]-[ferredoxin] + CO2 + 2 H(+). Functionally, CODH oxidizes carbon monoxide coupled, via CooF, to the reduction of a hydrogen cation by a hydrogenase (possibly CooH). This chain is Carbon monoxide dehydrogenase 1 (cooS1), found in Methanosarcina mazei (strain ATCC BAA-159 / DSM 3647 / Goe1 / Go1 / JCM 11833 / OCM 88) (Methanosarcina frisia).